We begin with the raw amino-acid sequence, 389 residues long: Phospho-N-acetylmuramoyl-pentapeptide-transferase (389 aa).

Helical transmembrane passes span R25 to I45, T73 to L93, F97 to Y117, F135 to A155, I190 to A210, G222 to M242, A259 to F279, F287 to V307, I311 to V331, and Q366 to L386.

It belongs to the glycosyltransferase 4 family. MraY subfamily. Mg(2+) serves as cofactor.

The protein localises to the cell inner membrane. It catalyses the reaction UDP-N-acetyl-alpha-D-muramoyl-L-alanyl-gamma-D-glutamyl-meso-2,6-diaminopimeloyl-D-alanyl-D-alanine + di-trans,octa-cis-undecaprenyl phosphate = di-trans,octa-cis-undecaprenyl diphospho-N-acetyl-alpha-D-muramoyl-L-alanyl-D-glutamyl-meso-2,6-diaminopimeloyl-D-alanyl-D-alanine + UMP. Its pathway is cell wall biogenesis; peptidoglycan biosynthesis. In terms of biological role, catalyzes the initial step of the lipid cycle reactions in the biosynthesis of the cell wall peptidoglycan: transfers peptidoglycan precursor phospho-MurNAc-pentapeptide from UDP-MurNAc-pentapeptide onto the lipid carrier undecaprenyl phosphate, yielding undecaprenyl-pyrophosphoryl-MurNAc-pentapeptide, known as lipid I. The protein is Phospho-N-acetylmuramoyl-pentapeptide-transferase of Paraburkholderia phytofirmans (strain DSM 17436 / LMG 22146 / PsJN) (Burkholderia phytofirmans).